The sequence spans 331 residues: Tryptophan--tRNA ligase 1 (331 aa).

ATP is bound by residues 9-11 and 17-18; these read KPT and GN. The 'HIGH' region motif lies at 10-18; that stretch reads PTGHLTLGN. Aspartate 137 contacts L-tryptophan. ATP-binding positions include 149–151, valine 188, and 197–201; these read GDD and KMGKS. Residues 197-201 carry the 'KMSKS' region motif; that stretch reads KMGKS.

It belongs to the class-I aminoacyl-tRNA synthetase family. Homodimer.

The protein resides in the cytoplasm. It catalyses the reaction tRNA(Trp) + L-tryptophan + ATP = L-tryptophyl-tRNA(Trp) + AMP + diphosphate + H(+). Functionally, catalyzes the attachment of tryptophan to tRNA(Trp). In Streptomyces avermitilis (strain ATCC 31267 / DSM 46492 / JCM 5070 / NBRC 14893 / NCIMB 12804 / NRRL 8165 / MA-4680), this protein is Tryptophan--tRNA ligase 1.